The sequence spans 187 residues: Holliday junction resolvase (187 aa).

Belongs to the RuvC family. Poxviruses-type subfamily. The cofactor is Mg(2+). In terms of processing, acylated by palmitic acid group(s).

The protein resides in the membrane. In terms of biological role, nuclease that specifically cleaves and resolves four-way DNA Holliday junctions into linear duplex products. This is Holliday junction resolvase from Vaccinia virus (strain Ankara) (VACV).